Reading from the N-terminus, the 378-residue chain is Myoglobin (378 aa).

At Ala-2 the chain carries Blocked amino end (Ala). Residue His-332 participates in heme binding.

Belongs to the indoleamine 2,3-dioxygenase family. Homodimer. The cofactor is heme.

Serves a reserve supply of oxygen and facilitates the movement of oxygen within muscles. The protein is Myoglobin of Haliotis diversicolor (Abalone).